The sequence spans 4574 residues: E3 ubiquitin-protein ligase MYCBP2 (4574 aa).

Disordered stretches follow at residues 92-115 (RGKK…VKTR) and 599-620 (SASK…PYKP). RCC1 repeat units lie at residues 591-646 (DGSV…IVTK), 690-746 (SGEV…MMCQ), 943-993 (NGDV…VLLM), and 995-1051 (GQVF…LRID). Basic residues predominate over residues 611–620 (SRRQPKPYKP). Cys1733 and Cys1850 are oxidised to a cystine. Disordered regions lie at residues 1976 to 1998 (APPT…EQGL) and 2313 to 2332 (LQRL…LTFG). Composition is skewed to polar residues over residues 1981–1998 (NPNQ…EQGL) and 2317–2328 (PGTSSNSATGTD). One copy of the Filamin repeat lies at 2336–2417 (APKLEATYEP…IHVTIDGIEI (82 aa)). 5 disordered regions span residues 2613–2824 (GFDY…PSPH), 2845–2922 (SNDE…KQAM), 3085–3116 (SPGS…KAEV), 3345–3365 (PGSN…TDSD), and 3505–3526 (FETE…EQEK). Composition is skewed to basic and acidic residues over residues 2639–2663 (HRQE…KSKN) and 2678–2688 (DTGKLRSDSHS). A compositionally biased stretch (polar residues) spans 2716–2729 (NPGSRSSSPKQKTF). Over residues 2730–2745 (TSGRSSPSSTSSPRSS) the composition is skewed to low complexity. Composition is skewed to basic and acidic residues over residues 2761 to 2772 (VHLDPPRERSKS), 2854 to 2864 (SELHNAEEGSS), and 2874 to 2883 (PVKEELESRS). Composition is skewed to basic residues over residues 2887–2900 (VSRK…RPKK) and 3102–3111 (KKTKKEKKKK). Positions 3515-3526 (NKGNKENLEQEK) are enriched in basic and acidic residues. Residues 3617–3795 (FNISVQSGYE…SVAQQKNCEA (179 aa)) enclose the DOC domain. A disordered region spans residues 3815–3841 (GDAEPTPEQEEKNLLSSPEGEDKAPSD). Zn(2+) is bound by residues Cys4324, Cys4327, Cys4342, His4344, His4347, Cys4350, Cys4371, Cys4374, Cys4440, and Cys4443. Residues 4324–4375 (CMICFTEALSAAPAIQLDCSHVFHLQCTRRVLENRWLGPRITFGFMSCPICK) form an RING-type; atypical zinc finger. Positions 4435–4572 (YAYYVCFKCK…LGCGVCRNAH (138 aa)) are tandem cysteine domain. Residue Cys4454 is part of the active site. Zn(2+)-binding residues include Cys4471, Cys4474, Cys4483, His4486, Cys4495, Cys4498, and Cys4499. Cys4506 is a catalytic residue. Cys4513, Cys4516, Cys4534, Cys4548, His4554, Cys4565, and Cys4568 together coordinate Zn(2+).

The protein belongs to the RING-Cys relay (RCR) family. As to expression, widely expressed when the visual system begins developing. In the eye, expressed in all cells, including retinal ganglion cells, with no obvious gradient.

It is found in the nucleus. Its subcellular location is the cell projection. The protein resides in the axon. It localises to the cytoplasm. The protein localises to the cytoskeleton. The catalysed reaction is [E2 ubiquitin-conjugating enzyme]-S-ubiquitinyl-L-cysteine + [acceptor protein]-L-threonine = [E2 ubiquitin-conjugating enzyme]-L-cysteine + [acceptor protein]-3-O-ubiquitinyl-L-threonine.. The protein operates within protein modification; protein ubiquitination. Its function is as follows. Atypical E3 ubiquitin-protein ligase which specifically mediates ubiquitination of threonine and serine residues on target proteins, instead of ubiquitinating lysine residues. Shows esterification activity towards both threonine and serine, with a preference for threonine, and acts via two essential catalytic cysteine residues that relay ubiquitin to its substrate via thioester intermediates. Interacts with the E2 enzymes UBE2D1, UBE2D3, UBE2E1 and UBE2L3. Plays a key role in neural development, probably by mediating ubiquitination of threonine residues on target proteins. Involved in different processes such as regulation of neurite outgrowth, synaptic growth, synaptogenesis and axon degeneration. Required in the visual system for correct fasciculation, targeting and mapping of retinal axons. Acts as a regulator of pteridine synthesis. May play a role in the regulation of the circadian clock gene expression. The chain is E3 ubiquitin-protein ligase MYCBP2 from Danio rerio (Zebrafish).